A 139-amino-acid polypeptide reads, in one-letter code: Galactoside-binding soluble lectin 13 (139 aa).

The Galectin domain maps to valine 6–cysteine 138.

In terms of assembly, homodimer; disulfide-linked. In terms of tissue distribution, detected in adult and fetal spleen, fetal kidney, adult urinary bladder and placenta. Placental expression originates predominantly from the syncytiotrophoblast.

The protein localises to the cytoplasm. It is found in the nucleus matrix. Binds beta-galactoside and lactose. Strong inducer of T-cell apoptosis. Has hemagglutinating activity towards chicken erythrocytes. In Homo sapiens (Human), this protein is Galactoside-binding soluble lectin 13 (LGALS13).